The chain runs to 1221 residues: DNA-directed RNA polymerase subunit beta' (1221 aa).

Cysteine 60, cysteine 62, cysteine 75, and cysteine 78 together coordinate Zn(2+). Mg(2+) is bound by residues aspartate 449, aspartate 451, and aspartate 453. The Zn(2+) site is built by cysteine 821, cysteine 896, cysteine 903, and cysteine 906.

This sequence belongs to the RNA polymerase beta' chain family. As to quaternary structure, the RNAP catalytic core consists of 2 alpha, 1 beta, 1 beta' and 1 omega subunit. When a sigma factor is associated with the core the holoenzyme is formed, which can initiate transcription. Mg(2+) is required as a cofactor. Requires Zn(2+) as cofactor.

The catalysed reaction is RNA(n) + a ribonucleoside 5'-triphosphate = RNA(n+1) + diphosphate. Functionally, DNA-dependent RNA polymerase catalyzes the transcription of DNA into RNA using the four ribonucleoside triphosphates as substrates. The protein is DNA-directed RNA polymerase subunit beta' of Lactobacillus delbrueckii subsp. bulgaricus (strain ATCC BAA-365 / Lb-18).